The sequence spans 173 residues: Regulator of ribonuclease activity A (173 aa).

This sequence belongs to the RraA family. In terms of assembly, homotrimer. Binds to both RNA-binding sites in the C-terminal region of Rne and to RhlB.

The protein resides in the cytoplasm. Globally modulates RNA abundance by binding to RNase E (Rne) and regulating its endonucleolytic activity. Can modulate Rne action in a substrate-dependent manner by altering the composition of the degradosome. Modulates RNA-binding and helicase activities of the degradosome. In Vibrio vulnificus (strain YJ016), this protein is Regulator of ribonuclease activity A.